Consider the following 86-residue polypeptide: Dynein light chain 1, cytoplasmic (86 aa).

This sequence belongs to the dynein light chain family. Homodimer. Cytoplasmic dynein consists of two catalytic heavy chains (HCs) and a number of non-catalytic subunits which present intermediate chains (ICs), light intermediate chains (LICs) and light chains (LCs). Component of the nuclear pore complex (NPC). NPC constitutes the exclusive means of nucleocytoplasmic transport. NPCs allow the passive diffusion of ions and small molecules and the active, nuclear transport receptor-mediated bidirectional transport of macromolecules such as proteins, RNAs, ribonucleoparticles (RNPs), and ribosomal subunits across the nuclear envelope. Due to its 8-fold rotational symmetry, all subunits are present with 8 copies or multiples thereof.

Its subcellular location is the cytoplasm. The protein localises to the cytoskeleton. It is found in the nucleus. It localises to the nuclear pore complex. Its function is as follows. Acts as one of several non-catalytic accessory components of the cytoplasmic dynein complex that are thought to be involved in linking dynein to cargos and to adapter proteins that regulate dynein function. Cytoplasmic dynein 1 acts as a motor for the intracellular retrograde motility of vesicles and organelles along microtubules. May play a role in changing or maintaining the spatial distribution of cytoskeletal structures. Also a component of the nuclear pore complex. In Candida glabrata (strain ATCC 2001 / BCRC 20586 / JCM 3761 / NBRC 0622 / NRRL Y-65 / CBS 138) (Yeast), this protein is Dynein light chain 1, cytoplasmic (DYN2).